The sequence spans 409 residues: Immediate early response gene 5-like protein (409 aa).

Disordered stretches follow at residues Gln-168–Ser-237 and Gly-312–Pro-335. A compositionally biased stretch (pro residues) spans Gln-184–Pro-195. 2 stretches are compositionally biased toward low complexity: residues Ala-196–Pro-212 and Pro-220–Ser-237. Residues Gln-313 to Gly-324 are compositionally biased toward acidic residues.

This sequence belongs to the IER family.

The protein is Immediate early response gene 5-like protein (Ier5l) of Rattus norvegicus (Rat).